A 323-amino-acid polypeptide reads, in one-letter code: Porphobilinogen deaminase (323 aa).

C251 carries the post-translational modification S-(dipyrrolylmethanemethyl)cysteine.

The protein belongs to the HMBS family. As to quaternary structure, monomer. The cofactor is dipyrromethane.

It catalyses the reaction 4 porphobilinogen + H2O = hydroxymethylbilane + 4 NH4(+). It functions in the pathway porphyrin-containing compound metabolism; protoporphyrin-IX biosynthesis; coproporphyrinogen-III from 5-aminolevulinate: step 2/4. Its pathway is porphyrin-containing compound metabolism; chlorophyll biosynthesis. Its function is as follows. Tetrapolymerization of the monopyrrole PBG into the hydroxymethylbilane pre-uroporphyrinogen in several discrete steps. In Nostoc sp. (strain PCC 7120 / SAG 25.82 / UTEX 2576), this protein is Porphobilinogen deaminase (hemC).